A 108-amino-acid polypeptide reads, in one-letter code: MGVQVVPIAPGDGSTYPKNGQKVTVHYTGTLDDGTKFDSSRDRNKPFKFTIGKGEVIRGWDEGVAQLSVGQRAKLICSPDYAYGSRGHPGVIPPNSTLTFDVELLKVE.

Residues 1 to 21 form a disordered region; that stretch reads MGVQVVPIAPGDGSTYPKNGQ. Positions 20 to 108 constitute a PPIase FKBP-type domain; that stretch reads GQKVTVHYTG…TFDVELLKVE (89 aa).

This sequence belongs to the FKBP-type PPIase family. FKBP1 subfamily.

It is found in the cytoplasm. The catalysed reaction is [protein]-peptidylproline (omega=180) = [protein]-peptidylproline (omega=0). Its function is as follows. PPIases accelerate the folding of proteins. It catalyzes the cis-trans isomerization of proline imidic peptide bonds in oligopeptides. Binds to ligand-free TGF beta type I receptor, from which it is released upon a ligand-induced, type II receptor mediated phosphorylation of the type I receptor. Binding is inhibitory to the signaling pathways of the TGF beta family ligands. In Drosophila melanogaster (Fruit fly), this protein is Peptidyl-prolyl cis-trans isomerase Fkbp12.